The chain runs to 212 residues: Large ribosomal subunit protein bL25 (212 aa).

Residues 179-212 (EPEEEELPEDDEAAAEGEDAAAGEEAEAPAESED) are disordered.

The protein belongs to the bacterial ribosomal protein bL25 family. CTC subfamily. In terms of assembly, part of the 50S ribosomal subunit; part of the 5S rRNA/L5/L18/L25 subcomplex. Contacts the 5S rRNA. Binds to the 5S rRNA independently of L5 and L18.

This is one of the proteins that binds to the 5S RNA in the ribosome where it forms part of the central protuberance. In Corynebacterium urealyticum (strain ATCC 43042 / DSM 7109), this protein is Large ribosomal subunit protein bL25.